A 524-amino-acid polypeptide reads, in one-letter code: 2-isopropylmalate synthase (524 aa).

A Pyruvate carboxyltransferase domain is found at 15-275; the sequence is VVVFDTTMRD…PYGTSVDPVH (261 aa). 4 residues coordinate Mn(2+): D24, H212, H214, and N248. Residues 401–524 are regulatory domain; it reads RVSRLRVVAG…RPEAAIASGF (124 aa).

It belongs to the alpha-IPM synthase/homocitrate synthase family. LeuA type 1 subfamily. As to quaternary structure, homodimer. It depends on Mn(2+) as a cofactor.

Its subcellular location is the cytoplasm. It catalyses the reaction 3-methyl-2-oxobutanoate + acetyl-CoA + H2O = (2S)-2-isopropylmalate + CoA + H(+). It functions in the pathway amino-acid biosynthesis; L-leucine biosynthesis; L-leucine from 3-methyl-2-oxobutanoate: step 1/4. In terms of biological role, catalyzes the condensation of the acetyl group of acetyl-CoA with 3-methyl-2-oxobutanoate (2-ketoisovalerate) to form 3-carboxy-3-hydroxy-4-methylpentanoate (2-isopropylmalate). This chain is 2-isopropylmalate synthase, found in Caulobacter vibrioides (strain ATCC 19089 / CIP 103742 / CB 15) (Caulobacter crescentus).